A 218-amino-acid chain; its full sequence is Hypoxanthine-guanine phosphoribosyltransferase (218 aa).

Lys-69 is a binding site for GMP. N6-acetyllysine is present on Lys-103. Lys-115 participates in a covalent cross-link: Glycyl lysine isopeptide (Lys-Gly) (interchain with G-Cter in SUMO1); alternate. Residue Lys-115 forms a Glycyl lysine isopeptide (Lys-Gly) (interchain with G-Cter in SUMO2); alternate linkage. GMP contacts are provided by residues 134-142 (EDIIDTGKT), Lys-166, 186-188 (KFV), and Asp-194. Asp-138 functions as the Proton acceptor in the catalytic mechanism. A Phosphothreonine modification is found at Thr-142. Mg(2+) is bound at residue Asp-194.

Belongs to the purine/pyrimidine phosphoribosyltransferase family. Homotetramer. The cofactor is Mg(2+).

Its subcellular location is the cytoplasm. It catalyses the reaction IMP + diphosphate = hypoxanthine + 5-phospho-alpha-D-ribose 1-diphosphate. The enzyme catalyses GMP + diphosphate = guanine + 5-phospho-alpha-D-ribose 1-diphosphate. It functions in the pathway purine metabolism; IMP biosynthesis via salvage pathway; IMP from hypoxanthine: step 1/1. Converts guanine to guanosine monophosphate, and hypoxanthine to inosine monophosphate. Transfers the 5-phosphoribosyl group from 5-phosphoribosylpyrophosphate onto the purine. Plays a central role in the generation of purine nucleotides through the purine salvage pathway. The sequence is that of Hypoxanthine-guanine phosphoribosyltransferase (Hprt1) from Rattus norvegicus (Rat).